The sequence spans 478 residues: Proline--tRNA ligase (478 aa).

It belongs to the class-II aminoacyl-tRNA synthetase family. ProS type 3 subfamily. Homodimer.

The protein localises to the cytoplasm. The enzyme catalyses tRNA(Pro) + L-proline + ATP = L-prolyl-tRNA(Pro) + AMP + diphosphate. Functionally, catalyzes the attachment of proline to tRNA(Pro) in a two-step reaction: proline is first activated by ATP to form Pro-AMP and then transferred to the acceptor end of tRNA(Pro). The sequence is that of Proline--tRNA ligase from Clostridium botulinum (strain Okra / Type B1).